A 359-amino-acid chain; its full sequence is Peptide chain release factor 1 (359 aa).

Glutamine 235 bears the N5-methylglutamine mark. Residues 283–309 (QKAESERSQARRSQVGSGDRSERIRTY) are disordered.

Belongs to the prokaryotic/mitochondrial release factor family. In terms of processing, methylated by PrmC. Methylation increases the termination efficiency of RF1.

The protein localises to the cytoplasm. Its function is as follows. Peptide chain release factor 1 directs the termination of translation in response to the peptide chain termination codons UAG and UAA. This chain is Peptide chain release factor 1, found in Brucella suis (strain ATCC 23445 / NCTC 10510).